The chain runs to 536 residues: Quinate permease (536 aa).

Residues 1–26 (MTLLALKEDRPTPKAVYNWRVYTCAA) are Cytoplasmic-facing. Residues 27–47 (IASFASCMIGYDSSFIGTTLA) form a helical membrane-spanning segment. Residues 48–74 (LPSFTKEFDFASYTPGALALLQSNIVS) lie on the Extracellular side of the membrane. The helical transmembrane segment at 75-95 (VYQAGAFFGSLFAFATSYFLG) threads the bilayer. Residues 96 to 98 (RRR) lie on the Cytoplasmic side of the membrane. A helical transmembrane segment spans residues 99–119 (SLIAFSVVFIIGAAIMLAADG). Residues 120-131 (QRRGVDPIIAGR) lie on the Extracellular side of the membrane. A helical membrane pass occupies residues 132 to 152 (VLAGIGVGGASNMVPIYISEL). Over 153–160 (APPAVRGR) the chain is Cytoplasmic. Residues 161–181 (LVGIYELGWQIGGLVGFWINY) form a helical membrane-spanning segment. Over 182 to 195 (GVNTTMAPTRSQWL) the chain is Extracellular. N184 carries an N-linked (GlcNAc...) asparagine glycan. The chain crosses the membrane as a helical span at residues 196 to 216 (IPFAVQLIPAGLLFLGSFWIP). The Cytoplasmic segment spans residues 217 to 285 (ESPRWLFANG…SLKQPKVRWR (69 aa)). A helical transmembrane segment spans residues 286–306 (FFLGGMLFLWQNGSGINAINY). Residues 307–327 (YSPTVFRSIGITGTNTGFLTT) are Extracellular-facing. A helical transmembrane segment spans residues 328–349 (GIFGVVKMVLTIIWLLWLVDLV). Topologically, residues 350–352 (GRR) are cytoplasmic. A helical membrane pass occupies residues 353–373 (RILFVGATGGSLCMWFIGAYI). The Extracellular portion of the chain corresponds to 374-389 (KIAGPGTTKTEEAKLT). A helical transmembrane segment spans residues 390–410 (SGGIAAIFFFYLWTAFYTPSW). The Cytoplasmic portion of the chain corresponds to 411–435 (NGTPWVINSEMFDQNTRSLGQASAA). A helical membrane pass occupies residues 436–456 (ANNWFWNFIISRFTPQMFIKM). The Extracellular segment spans residues 457–458 (EY). Residues 459 to 479 (GVYFFFASLMLLSVVFIYFFI) form a helical membrane-spanning segment. Residues 480–536 (PETKSIPLEAMDRLFAIKSVHNANKILMDELNFDRNPEREQSSLDEKDRVTQTENAV) are Cytoplasmic-facing. A compositionally biased stretch (basic and acidic residues) spans 516–530 (PEREQSSLDEKDRVT). A disordered region spans residues 516-536 (PEREQSSLDEKDRVTQTENAV).

Belongs to the major facilitator superfamily. Sugar transporter (TC 2.A.1.1) family.

Its subcellular location is the membrane. This chain is Quinate permease (qa-y), found in Neurospora africana.